The primary structure comprises 543 residues: CTP synthase (543 aa).

Residues 1–267 form an amidoligase domain region; sequence MTKYVFVTGG…ATQVLNLLNL (267 aa). Serine 13 serves as a coordination point for CTP. Serine 13 lines the UTP pocket. Residues 14–19 and aspartate 71 each bind ATP; that span reads SIGKGI. 2 residues coordinate Mg(2+): aspartate 71 and glutamate 141. CTP contacts are provided by residues 148 to 150, 188 to 193, and lysine 224; these read DIE and KTKPTQ. Residues 188-193 and lysine 224 contribute to the UTP site; that span reads KTKPTQ. The Glutamine amidotransferase type-1 domain maps to 292-534; sequence EVAIVGKYVR…LAAAAKNSNR (243 aa). Glycine 354 lines the L-glutamine pocket. Cysteine 381 functions as the Nucleophile; for glutamine hydrolysis in the catalytic mechanism. Residues 382–385, glutamate 405, and arginine 462 each bind L-glutamine; that span reads LGMQ. Residues histidine 507 and glutamate 509 contribute to the active site.

It belongs to the CTP synthase family. Homotetramer.

The catalysed reaction is UTP + L-glutamine + ATP + H2O = CTP + L-glutamate + ADP + phosphate + 2 H(+). It catalyses the reaction L-glutamine + H2O = L-glutamate + NH4(+). The enzyme catalyses UTP + NH4(+) + ATP = CTP + ADP + phosphate + 2 H(+). The protein operates within pyrimidine metabolism; CTP biosynthesis via de novo pathway; CTP from UDP: step 2/2. Its activity is regulated as follows. Allosterically activated by GTP, when glutamine is the substrate; GTP has no effect on the reaction when ammonia is the substrate. The allosteric effector GTP functions by stabilizing the protein conformation that binds the tetrahedral intermediate(s) formed during glutamine hydrolysis. Inhibited by the product CTP, via allosteric rather than competitive inhibition. Catalyzes the ATP-dependent amination of UTP to CTP with either L-glutamine or ammonia as the source of nitrogen. Regulates intracellular CTP levels through interactions with the four ribonucleotide triphosphates. In Thermosynechococcus vestitus (strain NIES-2133 / IAM M-273 / BP-1), this protein is CTP synthase.